Here is a 485-residue protein sequence, read N- to C-terminus: BTB/POZ domain-containing protein YLR108C (485 aa).

The BTB domain occupies 26-121; the sequence is EVFKIRIGQK…LIKEYDYHFT (96 aa).

Its subcellular location is the nucleus. This is BTB/POZ domain-containing protein YLR108C from Saccharomyces cerevisiae (strain ATCC 204508 / S288c) (Baker's yeast).